Here is a 354-residue protein sequence, read N- to C-terminus: Ornithine transcarbamylase, mitochondrial (354 aa).

Residues 1 to 32 (MLFHLRTLLNNAALRNGHNFVVRNFRCGQPLQ) constitute a mitochondrion transit peptide. Lys70 bears the N6-acetyllysine; alternate mark. Lys70 bears the N6-succinyllysine; alternate mark. Lys80 is modified (N6-succinyllysine). Position 88 is an N6-acetyllysine; alternate (Lys88). Lys88 carries the N6-succinyllysine; alternate modification. A Phosphoserine modification is found at Ser133. 4 positions are modified to N6-acetyllysine; alternate: Lys144, Lys221, Lys231, and Lys238. N6-succinyllysine; alternate is present on residues Lys144, Lys221, Lys231, and Lys238. Position 243 is an N6-acetyllysine (Lys243). Residue Asp263 is part of the active site. Lys274 and Lys289 each carry N6-succinyllysine. At Lys292 the chain carries N6-acetyllysine; alternate. Lys292 is subject to N6-succinyllysine; alternate. Cys303 is an active-site residue. Lys307 bears the N6-acetyllysine; alternate mark. Lys307 is subject to N6-succinyllysine; alternate.

The protein belongs to the aspartate/ornithine carbamoyltransferase superfamily. OTCase family. In terms of assembly, homotrimer. In terms of processing, acetylation at Lys-88 negatively regulates ornithine carbamoyltransferase activity in response to nutrient signals.

Its subcellular location is the mitochondrion matrix. The catalysed reaction is carbamoyl phosphate + L-ornithine = L-citrulline + phosphate + H(+). The protein operates within nitrogen metabolism; urea cycle; L-citrulline from L-ornithine and carbamoyl phosphate: step 1/1. Its activity is regulated as follows. Negatively regulated by lysine acetylation. Its function is as follows. Catalyzes the second step of the urea cycle, the condensation of carbamoyl phosphate with L-ornithine to form L-citrulline. The urea cycle ensures the detoxification of ammonia by converting it to urea for excretion. This Bos taurus (Bovine) protein is Ornithine transcarbamylase, mitochondrial.